The chain runs to 513 residues: Xylose import ATP-binding protein XylG (513 aa).

ABC transporter domains lie at L5 to E242 and L259 to E505. G37 to S44 serves as a coordination point for ATP.

It belongs to the ABC transporter superfamily. Xylose importer (TC 3.A.1.2.4) family. The complex is composed of two ATP-binding proteins (XylG), two transmembrane proteins (XylH) and a solute-binding protein (XylF).

It is found in the cell inner membrane. The enzyme catalyses D-xylose(out) + ATP + H2O = D-xylose(in) + ADP + phosphate + H(+). Its function is as follows. Part of the ABC transporter complex XylFGH involved in xylose import. Responsible for energy coupling to the transport system. The polypeptide is Xylose import ATP-binding protein XylG (Shigella boydii serotype 4 (strain Sb227)).